Consider the following 513-residue polypeptide: Histidine ammonia-lyase (513 aa).

A cross-link (5-imidazolinone (Ala-Gly)) is located at residues 146 to 148 (ASG). At S147 the chain carries 2,3-didehydroalanine (Ser).

Belongs to the PAL/histidase family. In terms of processing, contains an active site 4-methylidene-imidazol-5-one (MIO), which is formed autocatalytically by cyclization and dehydration of residues Ala-Ser-Gly.

The protein localises to the cytoplasm. The enzyme catalyses L-histidine = trans-urocanate + NH4(+). Its pathway is amino-acid degradation; L-histidine degradation into L-glutamate; N-formimidoyl-L-glutamate from L-histidine: step 1/3. The polypeptide is Histidine ammonia-lyase (Caulobacter vibrioides (strain NA1000 / CB15N) (Caulobacter crescentus)).